The following is a 373-amino-acid chain: Putative glutamate--cysteine ligase 2-1 (373 aa).

This sequence belongs to the glutamate--cysteine ligase type 2 family. YbdK subfamily.

The catalysed reaction is L-cysteine + L-glutamate + ATP = gamma-L-glutamyl-L-cysteine + ADP + phosphate + H(+). ATP-dependent carboxylate-amine ligase which exhibits weak glutamate--cysteine ligase activity. This Legionella pneumophila (strain Lens) protein is Putative glutamate--cysteine ligase 2-1.